The chain runs to 504 residues: DnaJ homolog subfamily C member 3 (504 aa).

A signal peptide spans 1 to 31 (MVAPGSVRSRLGAVFPFLLVLVDLQYEGAEC). TPR repeat units follow at residues 37–70 (VEKHLELGKKLLAAGQLADALSQFHAAVDGDPDN), 72–104 (IAYYRRATVFLAMGKSKAALPDLTRVIELKMDF), 105–138 (TAARLQRGHLLLKQGRLAEAEDDFKKVLKSNPSE), 154–187 (MQRLRAQALDAFDSADYTAAITFLDEILEVCVWD), 188–221 (AELRELRAECFIKEGEPRKAISDLKAASKLKNDN), 222–255 (TEAFYKISILYYQLGDHELSLSEVRECLKLDQDH), 268–301 (LNKLIGSAEELIRDGRYTDATSKYESVMKAEPSV), 306–339 (VRSKERICHCFSKDEKPVEAIKICSEVLQLEPDN), and 340–373 (VNALKDRAEAYLIEEMYDEAIQDYEAAQEQNEND). Cys248 and Cys258 are joined by a disulfide. Ser274 is modified (phosphoserine). Cys313 and Cys329 form a disulfide bridge. The interval 375-393 (QIREGLEKAQRLLKQSQKR) is flexible linker. The 69-residue stretch at 394 to 462 (DYYKILGVKR…EMRRKFDDGE (69 aa)) folds into the J domain. Residues 451 to 481 (DPEMRRKFDDGEDPLDAETQQGGGSNPFHRS) are disordered. At Ser475 the chain carries Phosphoserine.

Interacts with EIF2AK2 and EIF2AK3. Forms a trimeric complex with DNAJB1 and HSPA8. Interacts with THAP12.

The protein resides in the endoplasmic reticulum. In terms of biological role, involved in the unfolded protein response (UPR) during ER stress. Co-chaperone of HSPA8/HSC70, it stimulates its ATPase activity. May inhibit both the autophosphorylation of EIF2AK2/PKR and the ability of EIF2AK2 to catalyze phosphorylation of the EIF2A. May inhibit EIF2AK3/PERK activity. The chain is DnaJ homolog subfamily C member 3 (Dnajc3) from Rattus norvegicus (Rat).